The following is an 846-amino-acid chain: Cap-specific mRNA (nucleoside-2'-O-)-methyltransferase 1 (846 aa).

The tract at residues 1 to 81 is disordered; sequence MKRKSDSEQQ…LPDTLAEGSS (81 aa). The short motif at 2-20 is the Bipartite nuclear localization signal element; the sequence is KRKSDSEQQPSVQCRKKKR. A compositionally biased stretch (polar residues) spans 27–45; it reads NLSSTSDDDTQYSNHGTQE. Positions 87–133 constitute a G-patch domain; sequence YNSVSQKLMAKMGFREGEGLGKFGQGRKEIVETSKQKGRRGLGMVLK. Substrate contacts are provided by residues 203–207 and R218; that span reads KSAFD. Positions 231 to 450 constitute a RrmJ-type SAM-dependent 2'-O-MTase domain; sequence FFLNRAAMKM…ERYVVCRGLK (220 aa). N234 is a binding site for S-adenosyl-L-methionine. The active site involves K239. S-adenosyl-L-methionine-binding positions include 277-283 and 335-336; these read CAGPGGF and DV. D364 is an active-site residue. 374 to 376 contributes to the substrate binding site; sequence NIQ. The Proton acceptor role is filled by K404. N439 contacts substrate. In terms of domain architecture, WW spans 752–786; the sequence is KTINEPWSMAYSKSQKRKYFYNSKTKNSQFELPVE.

The protein localises to the nucleus. It carries out the reaction a 5'-end (N(7)-methyl 5'-triphosphoguanosine)-ribonucleoside in mRNA + S-adenosyl-L-methionine = a 5'-end (N(7)-methyl 5'-triphosphoguanosine)-(2'-O-methyl-ribonucleoside) in mRNA + S-adenosyl-L-homocysteine + H(+). In terms of biological role, S-adenosyl-L-methionine-dependent methyltransferase that mediates mRNA cap1 2'-O-ribose methylation to the 5'-cap structure of mRNAs. Methylates the ribose of the first nucleotide of a m(7)GpppG-capped mRNA and small nuclear RNA (snRNA) to produce m(7)GpppRm (cap1). Displays a preference for cap0 transcripts. Cap1 modification is linked to higher levels of translation. May be involved in the interferon response pathway. The sequence is that of Cap-specific mRNA (nucleoside-2'-O-)-methyltransferase 1 (cmtr1) from Xenopus laevis (African clawed frog).